A 211-amino-acid polypeptide reads, in one-letter code: Troponin I, cardiac muscle (211 aa).

Residues 1-25 (MADESSDAAGEPQPAPAPVRRRSSA) are disordered. An N-acetylalanine modification is found at Ala2. Phosphoserine is present on residues Ser5 and Ser6. Residues Ser23 and Ser24 each carry the phosphoserine; by PKA and PKD/PRKD1 modification. Tyr27 carries the post-translational modification Phosphotyrosine. Thr32 is modified (phosphothreonine; by STK4/MST1). The tract at residues 33–80 (EPHAKKKSKISASRKLQLKTLMLQIAKQEMEREAEERRGEKGRVLSTR) is involved in binding TNC. Residues Ser43 and Ser45 each carry the phosphoserine; by PKC/PRKCE modification. Phosphothreonine; by STK4/MST1 is present on Thr52. Residue Ser78 is modified to Phosphoserine. Thr79 bears the Phosphothreonine mark. A phosphothreonine; by STK4/MST1 mark is found at Thr130 and Thr144. The tract at residues 130 to 151 (TQKIYDLRGKFKRPTLRRVRIS) is involved in binding TNC and actin. Phosphoserine; by PAK3 is present on Ser151. Phosphoserine occurs at positions 167 and 200.

It belongs to the troponin I family. In terms of assembly, interacts with TRIM63. Binds to actin and tropomyosin. Interacts with STK4/MST1. Post-translationally, phosphorylated at Ser-23 and Ser-24 by PRKD1; phosphorylation reduces myofilament calcium sensitivity. Phosphorylated preferentially at Thr-32. Phosphorylation by STK4/MST1 alters its binding affinity to TNNC1 (cardiac Tn-C) and TNNT2 (cardiac Tn-T). Phosphorylated at Ser-43 and Ser-45 by PRKCE; phosphorylation increases myocardium contractile dysfunction.

Troponin I is the inhibitory subunit of troponin, the thin filament regulatory complex which confers calcium-sensitivity to striated muscle actomyosin ATPase activity. This chain is Troponin I, cardiac muscle (Tnni3), found in Rattus norvegicus (Rat).